We begin with the raw amino-acid sequence, 669 residues long: Elongation factor G-like protein (669 aa).

The tr-type G domain occupies 7–279 (ESLRNVAIVG…VLIKEAPDPS (273 aa)). Residues 16–23 (GPYGSGKT) are G1. Residue 16–23 (GPYGSGKT) participates in GTP binding. The segment at 59 to 63 (QMSVE) is G2. The tract at residues 80–83 (DCPG) is G3. Residues 80–84 (DCPGS) and 134–137 (NKMD) each bind GTP. The interval 134–137 (NKMD) is G4. Residues 257-259 (AAE) are G5.

The protein belongs to the TRAFAC class translation factor GTPase superfamily. Classic translation factor GTPase family. EF-G/EF-2 subfamily.

The polypeptide is Elongation factor G-like protein (Synechocystis sp. (strain ATCC 27184 / PCC 6803 / Kazusa)).